The primary structure comprises 131 residues: MIEIQILDPQLQTLTDPHARSIQKLGEQTMLAFQKTEDANHFIRGQHHRQAPRRPRSSDLLKPGQIRAQHLAVEEQQGRQCLTMRGDRNLALVRQPGQKCLDFAAAQGCRVTHTVETDEGTNPVDISLFGS.

This is an uncharacterized protein from Escherichia coli.